The sequence spans 354 residues: GTPase Obg (354 aa).

The region spanning 1–159 (MKFLDQCKIY…LWVWLRLKLI (159 aa)) is the Obg domain. One can recognise an OBG-type G domain in the interval 160-328 (ADVGLVGLPN…LLRAAFTQVR (169 aa)). GTP-binding positions include 166-173 (GLPNAGKS), 191-195 (FTTLT), 213-216 (DIPG), 280-283 (NKVD), and 309-311 (SGV). 2 residues coordinate Mg(2+): Ser173 and Thr193. Residues 333–354 (ETPAEAAIDEAPEEETPGGWQP) are disordered. Over residues 339-348 (AIDEAPEEET) the composition is skewed to acidic residues.

Belongs to the TRAFAC class OBG-HflX-like GTPase superfamily. OBG GTPase family. In terms of assembly, monomer. Mg(2+) is required as a cofactor.

Its subcellular location is the cytoplasm. An essential GTPase which binds GTP, GDP and possibly (p)ppGpp with moderate affinity, with high nucleotide exchange rates and a fairly low GTP hydrolysis rate. Plays a role in control of the cell cycle, stress response, ribosome biogenesis and in those bacteria that undergo differentiation, in morphogenesis control. The polypeptide is GTPase Obg (Caulobacter sp. (strain K31)).